A 459-amino-acid chain; its full sequence is MLKEYRTVTEVVGPLMVVEGVEGVKYDELVEIELHTGEKRRGKVLEVNGSKAMVQIFEGSSGINLKGTKAKFLGRPLELGVSEDMLGRVFDGMGRPNDNGPDIIPEKRVDINGEAINPMARDFPSEFIQTGVSAIDGLNTLVRGQKLPVFSAAGLPHAELAAQIARQAKVLNSDSKFAIVFAAIGITFEEAQFFQDEFKRTGAIDRSVLFMNLASDPAIERIATPRMALTCAEYLAYEKGMQVLVIMTDITNYAEALREISAARKEVPGRRGYPGYLYTDLSTLYERAGRLRGKEGSITQIPILTMPEDDKTHPIPDLTGYITEGQIILSRELYKKGIMPPIDVLPSLSRLKDKGIGKGKTREDHADTMNQLFAAYSQGKQAKELSAILGESALSDTDKKLAKFAEAFEDEYVSQGFNTNRTIEETLNLGWKLLKMLPRTELKRIRDEYLEKYMPREEE.

It belongs to the ATPase alpha/beta chains family.

Produces ATP from ADP in the presence of a proton gradient across the membrane. The V-type beta chain is a regulatory subunit. In Clostridium botulinum (strain Alaska E43 / Type E3), this protein is V-type ATP synthase beta chain.